A 434-amino-acid polypeptide reads, in one-letter code: Nicotinate phosphoribosyltransferase (434 aa).

At His-242 the chain carries Phosphohistidine; by autocatalysis.

The protein belongs to the NAPRTase family. In terms of processing, transiently phosphorylated on a His residue during the reaction cycle. Phosphorylation strongly increases the affinity for substrates and increases the rate of nicotinate D-ribonucleotide production. Dephosphorylation regenerates the low-affinity form of the enzyme, leading to product release.

The catalysed reaction is nicotinate + 5-phospho-alpha-D-ribose 1-diphosphate + ATP + H2O = nicotinate beta-D-ribonucleotide + ADP + phosphate + diphosphate. The protein operates within cofactor biosynthesis; NAD(+) biosynthesis; nicotinate D-ribonucleotide from nicotinate: step 1/1. Functionally, catalyzes the synthesis of beta-nicotinate D-ribonucleotide from nicotinate and 5-phospho-D-ribose 1-phosphate at the expense of ATP. This is Nicotinate phosphoribosyltransferase from Bradyrhizobium sp. (strain BTAi1 / ATCC BAA-1182).